The sequence spans 739 residues: Thiamine biosynthesis multifunctional protein ThiED (739 aa).

The interval 1–210 (MTDFSLYLVT…PSPAEAAREL (210 aa)) is thiamine-phosphate synthase. 4-amino-2-methyl-5-(diphosphooxymethyl)pyrimidine contacts are provided by residues 37-41 (QLRDK) and Asn69. Positions 70 and 88 each coordinate Mg(2+). Thr107 serves as a coordination point for 4-amino-2-methyl-5-(diphosphooxymethyl)pyrimidine. Position 140-142 (140-142 (TDT)) interacts with 2-[(2R,5Z)-2-carboxy-4-methylthiazol-5(2H)-ylidene]ethyl phosphate. Lys143 serves as a coordination point for 4-amino-2-methyl-5-(diphosphooxymethyl)pyrimidine. 2-[(2R,5Z)-2-carboxy-4-methylthiazol-5(2H)-ylidene]ethyl phosphate-binding positions include Gly174 and 194-195 (VS). Residues 226–481 (LTIAGTDPTG…GSGSGPVDHF (256 aa)) form a hydroxymethylpyrimidine/phosphomethylpyrimidine kinase region. Residue Gln263 participates in 4-amino-5-hydroxymethyl-2-methylpyrimidine binding. Residues 527–739 (YTRALWEATG…FDQATRQGWN (213 aa)) are thiaminase-2.

The protein in the N-terminal section; belongs to the thiamine-phosphate synthase family. This sequence in the central section; belongs to the ThiD family. In the C-terminal section; belongs to the thiaminase-2 family. It depends on Mg(2+) as a cofactor.

The catalysed reaction is 2-[(2R,5Z)-2-carboxy-4-methylthiazol-5(2H)-ylidene]ethyl phosphate + 4-amino-2-methyl-5-(diphosphooxymethyl)pyrimidine + 2 H(+) = thiamine phosphate + CO2 + diphosphate. The enzyme catalyses 2-(2-carboxy-4-methylthiazol-5-yl)ethyl phosphate + 4-amino-2-methyl-5-(diphosphooxymethyl)pyrimidine + 2 H(+) = thiamine phosphate + CO2 + diphosphate. It catalyses the reaction 4-methyl-5-(2-phosphooxyethyl)-thiazole + 4-amino-2-methyl-5-(diphosphooxymethyl)pyrimidine + H(+) = thiamine phosphate + diphosphate. It carries out the reaction 4-amino-5-hydroxymethyl-2-methylpyrimidine + ATP = 4-amino-2-methyl-5-(phosphooxymethyl)pyrimidine + ADP + H(+). The catalysed reaction is 4-amino-2-methyl-5-(phosphooxymethyl)pyrimidine + ATP = 4-amino-2-methyl-5-(diphosphooxymethyl)pyrimidine + ADP. Its pathway is cofactor biosynthesis; thiamine diphosphate biosynthesis; 4-amino-2-methyl-5-diphosphomethylpyrimidine from 5-amino-1-(5-phospho-D-ribosyl)imidazole: step 3/3. It functions in the pathway cofactor biosynthesis; thiamine diphosphate biosynthesis; thiamine phosphate from 4-amino-2-methyl-5-diphosphomethylpyrimidine and 4-methyl-5-(2-phosphoethyl)-thiazole: step 1/1. Condenses 4-methyl-5-(beta-hydroxyethyl)thiazole monophosphate (THZ-P) and 2-methyl-4-amino-5-hydroxymethyl pyrimidine pyrophosphate (HMP-PP) to form thiamine monophosphate (TMP). Functionally, catalyzes the phosphorylation of hydroxymethylpyrimidine phosphate (HMP-P) to HMP-PP, and of HMP to HMP-P. The polypeptide is Thiamine biosynthesis multifunctional protein ThiED (thiED) (Corynebacterium efficiens (strain DSM 44549 / YS-314 / AJ 12310 / JCM 11189 / NBRC 100395)).